A 380-amino-acid chain; its full sequence is Proline iminopeptidase (380 aa).

Residues Pro98–Asn360 form the AB hydrolase-1 domain. Residue Ser172 is the Nucleophile of the active site. Asp329 is an active-site residue. The active-site Proton donor is the His357.

This sequence belongs to the peptidase S33 family.

The protein resides in the cytoplasm. It catalyses the reaction Release of N-terminal proline from a peptide.. Its function is as follows. Specifically catalyzes the removal of N-terminal proline residues from peptides. This chain is Proline iminopeptidase (PIP), found in Arabidopsis thaliana (Mouse-ear cress).